The sequence spans 397 residues: MSVGRRRVKLLGILMMANVFIYLIVEVSKNSSQDKNGKGGVIIPKEKFWKPPSTPRAYWNREQEKLNRWYNPILNRVANQTGELATSPNTSHLSYCEPDSTVMTAVTDFNNLPDRFKDFLLYLRCRNYSLLIDQPKKCAKKPFLLLAIKSLIPHFARRQAIRESWGRETNVGNQTVVRVFLLGKTPPEDNHPDLSDMLKFESDKHQDILMWNYRDTFFNLSLKEVLFLRWVSTSCPDAEFVFKGDDDVFVNTHHILNYLNSLSKSKAKDLFIGDVIHNAGPHRDKKLKYYIPEVFYTGVYPPYAGGGGFLYSGPLALRLYSATSRVHLYPIDDVYTGMCLQKLGLVPEKHKGFRTFDIEEKNKKNICSYIDLMLVHSRKPQEMIDIWSQLQSPNLKC.

Over 1 to 7 (MSVGRRR) the chain is Cytoplasmic. The helical; Signal-anchor for type II membrane protein transmembrane segment at 8–28 (VKLLGILMMANVFIYLIVEVS) threads the bilayer. Residues 29–325 (KNSSQDKNGK…ALRLYSATSR (297 aa)) are Lumenal-facing. Asn-30, Asn-79, Asn-89, Asn-127, Asn-173, and Asn-219 each carry an N-linked (GlcNAc...) asparagine glycan.

It belongs to the glycosyltransferase 31 family. In terms of assembly, interacts with B3GNT8; this interaction greatly increases B3GNT2 catalytic activity, independently of B3GNT8 enzymatic activity. The cofactor is Mn(2+). In terms of tissue distribution, expressed in heart, brain, lung, kidney and testis and, to a lesser extent, in liver and skeletal muscle. No expression in spleen.

The protein resides in the golgi apparatus membrane. It catalyses the reaction a beta-D-galactosyl-(1-&gt;4)-N-acetyl-beta-D-glucosaminyl derivative + UDP-N-acetyl-alpha-D-glucosamine = an N-acetyl-beta-D-glucosaminyl-(1-&gt;3)-beta-D-galactosyl-(1-&gt;4)-N-acetyl-beta-D-glucosaminyl derivative + UDP + H(+). The protein operates within protein modification; protein glycosylation. In terms of biological role, beta-1,3-N-acetylglucosaminyltransferase involved in the synthesis of poly-N-acetyllactosamine. Catalyzes the initiation and elongation of poly-N-acetyllactosamine chains. Probably constitutes the main polylactosamine synthase. This Mus musculus (Mouse) protein is N-acetyllactosaminide beta-1,3-N-acetylglucosaminyltransferase 2 (B3GNT2).